A 542-amino-acid chain; its full sequence is GMP synthase [glutamine-hydrolyzing] (542 aa).

Positions 28-218 (MIVILDFGSQ…VYHICECEPT (191 aa)) constitute a Glutamine amidotransferase type-1 domain. C105 serves as the catalytic Nucleophile. Residues H192 and E194 contribute to the active site. A GMPS ATP-PPase domain is found at 219–417 (WTTEAFVDET…IGLPEEIVRR (199 aa)). Position 246 to 252 (246 to 252 (SGGVDSS)) interacts with ATP.

Homodimer.

The catalysed reaction is XMP + L-glutamine + ATP + H2O = GMP + L-glutamate + AMP + diphosphate + 2 H(+). The protein operates within purine metabolism; GMP biosynthesis; GMP from XMP (L-Gln route): step 1/1. Catalyzes the synthesis of GMP from XMP. This Crocosphaera subtropica (strain ATCC 51142 / BH68) (Cyanothece sp. (strain ATCC 51142)) protein is GMP synthase [glutamine-hydrolyzing].